We begin with the raw amino-acid sequence, 1342 residues long: DNA-directed RNA polymerase subunit beta (1342 aa).

The protein belongs to the RNA polymerase beta chain family. The RNAP catalytic core consists of 2 alpha, 1 beta, 1 beta' and 1 omega subunit. When a sigma factor is associated with the core the holoenzyme is formed, which can initiate transcription.

It catalyses the reaction RNA(n) + a ribonucleoside 5'-triphosphate = RNA(n+1) + diphosphate. DNA-dependent RNA polymerase catalyzes the transcription of DNA into RNA using the four ribonucleoside triphosphates as substrates. This chain is DNA-directed RNA polymerase subunit beta, found in Histophilus somni (strain 2336) (Haemophilus somnus).